A 573-amino-acid polypeptide reads, in one-letter code: uncharacterized protein (573 aa).

2 disordered regions span residues 1–33 and 60–101; these read MLQQ…SIPR and LVAN…SRYD. The segment covering 60-70 has biased composition (polar residues); that stretch reads LVANRSDNNGN. The N-linked (GlcNAc...) asparagine glycan is linked to Asn-63. Residues 84 to 95 are compositionally biased toward low complexity; the sequence is SSSTSSLPSTRN. 10 consecutive repeat copies span residues 102–103, 104–105, 106–107, 108–109, 110–111, 112–113, 114–115, 116–117, 118–119, and 120–121. The 10 X 2 AA tandem repeats of N-M stretch occupies residues 102-121; sequence NMNMNMNMNMNMNMNMNMNM. An N-linked (GlcNAc...) asparagine glycan is attached at Asn-123. Disordered stretches follow at residues 150 to 174, 192 to 271, 286 to 317, and 357 to 379; these read IPEK…PRVR, QFPN…IRSN, KSSN…PITS, and NNRI…DKRT. Residues 157–170 are compositionally biased toward polar residues; sequence SRYSLRSSPPTYSN. The segment covering 208–225 has biased composition (low complexity); it reads LPPSSTFPDSPSSSSLPL. The span at 226–252 shows a compositional bias: polar residues; it reads TQTGGPSSADNDSIATGTNNRSPQQTK. Asn-236 is a glycosylation site (N-linked (GlcNAc...) asparagine). N-linked (GlcNAc...) asparagine glycans are attached at residues Asn-437 and Asn-442. Low complexity-rich tracts occupy residues 441–457 and 466–483; these read INSS…SSSS and SISS…SKSK. The interval 441 to 483 is disordered; it reads INSSISSPAPSSSSSSSLVSRGPMQSISSSPTPAPSSGSSKSK. Residues Asn-498, Asn-535, and Asn-541 are each glycosylated (N-linked (GlcNAc...) asparagine).

The protein to yeast AFR1. Post-translationally, N-glycosylated.

This is an uncharacterized protein from Saccharomyces cerevisiae (strain ATCC 204508 / S288c) (Baker's yeast).